We begin with the raw amino-acid sequence, 108 residues long: AMTDILSAKDIEAALTSCQAADSFNYKSFFSKVGLKGKSTDQVKKIFGILDQDKSGFIEEDELQLFLQNFSSTARALTAAETKAFMAAGDTDGDGKIGVDEFQALVKA.

EF-hand domains follow at residues 38-73 (KSTD…FSST) and 77-108 (LTAA…LVKA). 11 residues coordinate Ca(2+): D51, D53, S55, F57, E59, E62, D90, D92, D94, K96, and E101.

It belongs to the parvalbumin family.

In terms of biological role, in muscle, parvalbumin is thought to be involved in relaxation after contraction. It binds two calcium ions. This chain is Parvalbumin beta, found in Graptemys geographica (Common map turtle).